A 57-amino-acid chain; its full sequence is uncharacterized protein (57 aa).

Positions 1 to 57 (MANHRGGSGNFAEDRERASEAGKKGGQHSGGNFKNDPQRASEAGKKGGKSSHGKSDN) are disordered. Basic and acidic residues-rich tracts occupy residues 12 to 23 (AEDRERASEAGK) and 36 to 45 (DPQRASEAGK). Residues 46-57 (KGGKSSHGKSDN) are compositionally biased toward basic residues.

Belongs to the con-10 family.

This is an uncharacterized protein from Escherichia coli (strain K12).